The chain runs to 261 residues: Putative ankyrin repeat protein L99 (261 aa).

ANK repeat units lie at residues 21–50 (KVNP…DVHA), 51–80 (HEDY…NIHS), 81–110 (DRDL…NVNA), 112–140 (QNSA…NIHA), 142–170 (NNFC…DINA), 171–203 (DNGA…IDNC), and 231–259 (NELK…NINS).

The protein is Putative ankyrin repeat protein L99 of Acanthamoeba polyphaga (Amoeba).